We begin with the raw amino-acid sequence, 204 residues long: Holliday junction branch migration complex subunit RuvA (204 aa).

The domain I stretch occupies residues 1–64; sequence MIGRLQGILL…EDAHLLFGFA (64 aa). Residues 65–143 form a domain II region; it reads QKTDRTLFRE…GIKQSDFFVE (79 aa). A flexible linker region spans residues 144–155; sequence STHIPLSPSIES. Residues 156-204 are domain III; the sequence is HSESSSDEAISALIALGYKPAEAEKMVKRVAKPELTSEQVIREALKAAL.

Belongs to the RuvA family. Homotetramer. Forms an RuvA(8)-RuvB(12)-Holliday junction (HJ) complex. HJ DNA is sandwiched between 2 RuvA tetramers; dsDNA enters through RuvA and exits via RuvB. An RuvB hexamer assembles on each DNA strand where it exits the tetramer. Each RuvB hexamer is contacted by two RuvA subunits (via domain III) on 2 adjacent RuvB subunits; this complex drives branch migration. In the full resolvosome a probable DNA-RuvA(4)-RuvB(12)-RuvC(2) complex forms which resolves the HJ.

It localises to the cytoplasm. The RuvA-RuvB-RuvC complex processes Holliday junction (HJ) DNA during genetic recombination and DNA repair, while the RuvA-RuvB complex plays an important role in the rescue of blocked DNA replication forks via replication fork reversal (RFR). RuvA specifically binds to HJ cruciform DNA, conferring on it an open structure. The RuvB hexamer acts as an ATP-dependent pump, pulling dsDNA into and through the RuvAB complex. HJ branch migration allows RuvC to scan DNA until it finds its consensus sequence, where it cleaves and resolves the cruciform DNA. This chain is Holliday junction branch migration complex subunit RuvA, found in Haemophilus influenzae (strain 86-028NP).